A 300-amino-acid polypeptide reads, in one-letter code: Glycine--tRNA ligase alpha subunit (300 aa).

Belongs to the class-II aminoacyl-tRNA synthetase family. As to quaternary structure, tetramer of two alpha and two beta subunits.

Its subcellular location is the cytoplasm. The enzyme catalyses tRNA(Gly) + glycine + ATP = glycyl-tRNA(Gly) + AMP + diphosphate. The protein is Glycine--tRNA ligase alpha subunit of Pseudoalteromonas translucida (strain TAC 125).